The sequence spans 126 residues: Large ribosomal subunit protein bL17 (126 aa).

Belongs to the bacterial ribosomal protein bL17 family. In terms of assembly, part of the 50S ribosomal subunit. Contacts protein L32.

This chain is Large ribosomal subunit protein bL17, found in Aliivibrio fischeri (strain ATCC 700601 / ES114) (Vibrio fischeri).